Consider the following 248-residue polypeptide: uncharacterized protein (248 aa).

Residues 104–122 (CDVAACVGATWIAGGFAGA) traverse the membrane as a helical segment.

Its subcellular location is the membrane. This is an uncharacterized protein from Escherichia coli (strain K12).